The following is a 478-amino-acid chain: Cysteine--tRNA ligase (478 aa).

Zn(2+) is bound at residue cysteine 27. A 'HIGH' region motif is present at residues 29–39 (PTTYNFIHLGN). The Zn(2+) site is built by cysteine 207, histidine 232, and glutamate 236. The 'KMSKS' region signature appears at 264–268 (KMSKS). Lysine 267 is an ATP binding site.

It belongs to the class-I aminoacyl-tRNA synthetase family. As to quaternary structure, monomer. It depends on Zn(2+) as a cofactor.

The protein resides in the cytoplasm. It catalyses the reaction tRNA(Cys) + L-cysteine + ATP = L-cysteinyl-tRNA(Cys) + AMP + diphosphate. This is Cysteine--tRNA ligase from Desulforudis audaxviator (strain MP104C).